The sequence spans 86 residues: UPF0291 protein LBA1279 (86 aa).

2 stretches are compositionally biased toward basic and acidic residues: residues 1–27 (MNKD…KENE) and 65–75 (NGKEVTSEKAK). Disordered stretches follow at residues 1–36 (MNKD…EEEE) and 65–86 (NGKE…LRKD). Positions 76–86 (QAQRKKGLRKD) are enriched in basic residues.

It belongs to the UPF0291 family.

It localises to the cytoplasm. This Lactobacillus acidophilus (strain ATCC 700396 / NCK56 / N2 / NCFM) protein is UPF0291 protein LBA1279.